A 334-amino-acid chain; its full sequence is Phospholipase A1 2 (334 aa).

The first 23 residues, 1–23 (MMNLKYLLFFCLVQALHYCYAYG), serve as a signal peptide directing secretion. Residues 24 to 33 (DPSLSNELDR) constitute a propeptide that is removed on maturation. Cys37 and Cys120 are joined by a disulfide. Ser170 serves as the catalytic Nucleophile. Asp198 functions as the Charge relay system in the catalytic mechanism. Intrachain disulfides connect Cys209–Cys214 and Cys252–Cys261. His263 functions as the Charge relay system in the catalytic mechanism. 3 cysteine pairs are disulfide-bonded: Cys278–Cys302, Cys279–Cys327, and Cys295–Cys300.

This sequence belongs to the AB hydrolase superfamily. Lipase family. Not glycosylated. In terms of tissue distribution, expressed by the venom gland.

It localises to the secreted. The catalysed reaction is a 1,2-diacyl-sn-glycero-3-phosphocholine + H2O = a 2-acyl-sn-glycero-3-phosphocholine + a fatty acid + H(+). Functionally, catalyzes the hydrolysis of phosphatidylcholine with phospholipase A1 activity (6.3 U/ml). May act as an allergen and induce hemolytic activity. This Vespa affinis (Lesser banded hornet) protein is Phospholipase A1 2.